The chain runs to 88 residues: Small ribosomal subunit protein bS20 (88 aa).

Residues 1–23 (MPNTKSAEKALRVADANRQENRR) show a composition bias toward basic and acidic residues. Disordered regions lie at residues 1 to 28 (MPNTKSAEKALRVADANRQENRRAKSQV) and 69 to 88 (PKNAARRKSRLMKKLNQAAK). Residues 71 to 81 (NAARRKSRLMK) show a composition bias toward basic residues.

This sequence belongs to the bacterial ribosomal protein bS20 family.

In terms of biological role, binds directly to 16S ribosomal RNA. The sequence is that of Small ribosomal subunit protein bS20 from Dehalococcoides mccartyi (strain ATCC BAA-2266 / KCTC 15142 / 195) (Dehalococcoides ethenogenes (strain 195)).